An 865-amino-acid polypeptide reads, in one-letter code: Bifunctional uridylyltransferase/uridylyl-removing enzyme (865 aa).

The uridylyltransferase stretch occupies residues 1-318 (MPHVDLNPLK…FPRPDSDARL (318 aa)). Positions 319-675 (IDDDFRNLRE…VRPTEHGEGL (357 aa)) are uridylyl-removing. Residues 437-559 (VDQHTLAVVR…VGDERRLAAL (123 aa)) enclose the HD domain. ACT domains are found at residues 676-762 (QVMV…RLPH) and 789-865 (RLSV…QQAA). The disordered stretch occupies residues 747–767 (DPHAARHAHAPRRLPHSHARR). The span at 751 to 767 (ARHAHAPRRLPHSHARR) shows a compositional bias: basic residues.

Belongs to the GlnD family. Requires Mg(2+) as cofactor.

The catalysed reaction is [protein-PII]-L-tyrosine + UTP = [protein-PII]-uridylyl-L-tyrosine + diphosphate. It catalyses the reaction [protein-PII]-uridylyl-L-tyrosine + H2O = [protein-PII]-L-tyrosine + UMP + H(+). Uridylyltransferase (UTase) activity is inhibited by glutamine, while glutamine activates uridylyl-removing (UR) activity. Its function is as follows. Modifies, by uridylylation and deuridylylation, the PII regulatory proteins (GlnB and homologs), in response to the nitrogen status of the cell that GlnD senses through the glutamine level. Under low glutamine levels, catalyzes the conversion of the PII proteins and UTP to PII-UMP and PPi, while under higher glutamine levels, GlnD hydrolyzes PII-UMP to PII and UMP (deuridylylation). Thus, controls uridylylation state and activity of the PII proteins, and plays an important role in the regulation of nitrogen assimilation and metabolism. This Bordetella bronchiseptica (strain ATCC BAA-588 / NCTC 13252 / RB50) (Alcaligenes bronchisepticus) protein is Bifunctional uridylyltransferase/uridylyl-removing enzyme.